The primary structure comprises 523 residues: DNA-directed RNA polymerase subunit Rpo2N (523 aa).

The interval 501-523 is disordered; the sequence is SSMGVEGIPGISMETTSTTSADD. The span at 513–523 shows a compositional bias: polar residues; sequence METTSTTSADD.

Belongs to the RNA polymerase beta chain family. Part of the RNA polymerase complex.

The protein resides in the cytoplasm. It carries out the reaction RNA(n) + a ribonucleoside 5'-triphosphate = RNA(n+1) + diphosphate. In terms of biological role, DNA-dependent RNA polymerase (RNAP) catalyzes the transcription of DNA into RNA using the four ribonucleoside triphosphates as substrates. The Rpo2 subunit (Rpo2N and Rpo2C in this organism) is implicated in DNA promoter recognition and in nucleotide binding. This Halobacterium salinarum (strain ATCC 29341 / DSM 671 / R1) protein is DNA-directed RNA polymerase subunit Rpo2N.